We begin with the raw amino-acid sequence, 586 residues long: Aspartate--tRNA(Asp/Asn) ligase (586 aa).

E172 contributes to the L-aspartate binding site. Residues 196-199 (QLYK) form an aspartate region. R218 contacts L-aspartate. ATP is bound by residues 218 to 220 (RDE) and Q227. An L-aspartate-binding site is contributed by H446. An ATP-binding site is contributed by E480. R487 serves as a coordination point for L-aspartate. Residue 532 to 535 (GIDR) coordinates ATP.

The protein belongs to the class-II aminoacyl-tRNA synthetase family. Type 1 subfamily. As to quaternary structure, homodimer.

It localises to the cytoplasm. The catalysed reaction is tRNA(Asx) + L-aspartate + ATP = L-aspartyl-tRNA(Asx) + AMP + diphosphate. Its function is as follows. Aspartyl-tRNA synthetase with relaxed tRNA specificity since it is able to aspartylate not only its cognate tRNA(Asp) but also tRNA(Asn). Reaction proceeds in two steps: L-aspartate is first activated by ATP to form Asp-AMP and then transferred to the acceptor end of tRNA(Asp/Asn). The sequence is that of Aspartate--tRNA(Asp/Asn) ligase from Borrelia garinii subsp. bavariensis (strain ATCC BAA-2496 / DSM 23469 / PBi) (Borreliella bavariensis).